A 396-amino-acid polypeptide reads, in one-letter code: ATP-dependent RNA helicase eIF4A (396 aa).

Positions 22–50 match the Q motif motif; that stretch reads YSFDDLNLKPNIVRGIFGYGYESPSAIQQ. Residues 53 to 223 form the Helicase ATP-binding domain; the sequence is ILPITEGRDV…TKFMNNPVRI (171 aa). 66–73 is an ATP binding site; that stretch reads AQSGTGKT. A DEAD box motif is present at residues 171 to 174; it reads DEAD. The region spanning 234-395 is the Helicase C-terminal domain; that stretch reads GIKQFYINVE…EMPANIGELF (162 aa).

This sequence belongs to the DEAD box helicase family. eIF4A subfamily. As to quaternary structure, component of the eIF4F complex, which composition varies with external and internal environmental conditions. It is composed of at least eIF4A, eIF4E and eIF4G.

The protein localises to the cytoplasm. The enzyme catalyses ATP + H2O = ADP + phosphate + H(+). ATP-dependent RNA helicase which is a subunit of the eIF4F complex involved in cap recognition and is required for mRNA binding to ribosome. In the current model of translation initiation, eIF4A unwinds RNA secondary structures in the 5'-UTR of mRNAs which is necessary to allow efficient binding of the small ribosomal subunit, and subsequent scanning for the initiator codon. The polypeptide is ATP-dependent RNA helicase eIF4A (TIF1) (Meyerozyma guilliermondii (strain ATCC 6260 / CBS 566 / DSM 6381 / JCM 1539 / NBRC 10279 / NRRL Y-324) (Yeast)).